Here is a 414-residue protein sequence, read N- to C-terminus: RNA exonuclease 4 (414 aa).

A disordered region spans residues 1 to 174 (MAKAKVKQDQ…GGTQPEPPKV (174 aa)). Residues 26 to 42 (QTKKQKKKKFWKNHPKI) show a composition bias toward basic residues. Basic and acidic residues-rich tracts occupy residues 90–108 (KFPK…DPEP) and 150–161 (KAEGTEQLDPPK). In terms of domain architecture, Exonuclease spans 228 to 379 (TVAMDCEMVG…QDAQAAMRLY (152 aa)).

Belongs to the REXO4 family.

It localises to the nucleus. The polypeptide is RNA exonuclease 4 (rexo4) (Xenopus tropicalis (Western clawed frog)).